The following is a 483-amino-acid chain: Alginate biosynthesis protein AlgA (483 aa).

Belongs to the mannose-6-phosphate isomerase type 2 family. As to quaternary structure, monomer. It depends on Co(2+) as a cofactor.

The enzyme catalyses D-mannose 6-phosphate = D-fructose 6-phosphate. The catalysed reaction is alpha-D-mannose 1-phosphate + GTP + H(+) = GDP-alpha-D-mannose + diphosphate. It functions in the pathway nucleotide-sugar biosynthesis; GDP-alpha-D-mannose biosynthesis; GDP-alpha-D-mannose from alpha-D-mannose 1-phosphate (GTP route): step 1/1. The protein operates within nucleotide-sugar biosynthesis; GDP-alpha-D-mannose biosynthesis; alpha-D-mannose 1-phosphate from D-fructose 6-phosphate: step 1/2. Functionally, produces a precursor for alginate polymerization. The alginate layer provides a protective barrier against host immune defenses and antibiotics. This is Alginate biosynthesis protein AlgA (algA) from Pseudomonas fluorescens.